The following is a 197-amino-acid chain: ATP-dependent Clp protease proteolytic subunit 2 (197 aa).

Catalysis depends on serine 96, which acts as the Nucleophile. Residue histidine 121 is part of the active site.

This sequence belongs to the peptidase S14 family. Fourteen ClpP subunits assemble into 2 heptameric rings which stack back to back to give a disk-like structure with a central cavity, resembling the structure of eukaryotic proteasomes.

It localises to the cytoplasm. It catalyses the reaction Hydrolysis of proteins to small peptides in the presence of ATP and magnesium. alpha-casein is the usual test substrate. In the absence of ATP, only oligopeptides shorter than five residues are hydrolyzed (such as succinyl-Leu-Tyr-|-NHMec, and Leu-Tyr-Leu-|-Tyr-Trp, in which cleavage of the -Tyr-|-Leu- and -Tyr-|-Trp bonds also occurs).. Functionally, cleaves peptides in various proteins in a process that requires ATP hydrolysis. Has a chymotrypsin-like activity. Plays a major role in the degradation of misfolded proteins. The protein is ATP-dependent Clp protease proteolytic subunit 2 of Parasynechococcus marenigrum (strain WH8102).